Reading from the N-terminus, the 322-residue chain is Solute carrier family 25 member 16 (322 aa).

3 Solcar repeats span residues 34–120 (FYWL…YKTF), 128–219 (SGHV…LKSV), and 241–322 (LKTH…AVAF).

It belongs to the mitochondrial carrier (TC 2.A.29) family.

Its subcellular location is the mitochondrion inner membrane. Its function is as follows. May be involved in the transport of coenzyme A in the mitochondrial matrix. Very little is known about the physiological function of this carrier. The sequence is that of Solute carrier family 25 member 16 from Rattus norvegicus (Rat).